The primary structure comprises 53 residues: Temporin-SHd (53 aa).

Residues 1-10 form the signal peptide; sequence FLGTINLSLC. Residues 11–34 constitute a propeptide that is removed on maturation; the sequence is EQERDADEEKRDEPDESDVEVEKR. F51 carries the phenylalanine amide modification.

The protein resides in the secreted. The protein localises to the target cell membrane. Its function is as follows. Non-amphipathic mildly cationic alpha-helical antimicrobial peptide with potent activity against Gram-positive (including methicillin-resistant Staphylococcus aureus (MRSA)) and Gram-negative bacteria, and some fungi, as well as against Trypanosoma and Leishmania (both promastigote and amastigote forms). Strongly and selectively perturbs anionic bilayer membranes by interacting with the polar head groups and acyl region of the phospholipids, with formation of regions of two coexisting phases, one phase rich in peptide and the other lipid-rich. Shows low hemolytic activity (LC(50)=44 uM) and a low toxicity for human monocytes THP-1 and THP-1-derived macrophages. Is not toxic to human hepatoma-derived cells. The sequence is that of Temporin-SHd from Pelophylax saharicus (Sahara frog).